A 224-amino-acid polypeptide reads, in one-letter code: MLTSQSKLQPREQVALYGAASLSDEQLATVILRSGTQHLPVEVVAQRLLQRYPDFQDLEQADLVQLRQIEGIGPVKAIELQAICELSRRIQNQRTLRFGVVASSQMVGQRMIESLAGETQEQLLAVYLDVKNQIIQIKQLYLGTLNSSVAHPREVFKWAVQYSAAKFILVHNHPSGQLAPSTQDINFTKRIVNCGQLMGITCLDHLIIGSSQYLSLREEGYLVD.

Residues 100–222 (VVASSQMVGQ…YLSLREEGYL (123 aa)) enclose the MPN domain. Residues histidine 171, histidine 173, and aspartate 184 each contribute to the Zn(2+) site. The short motif at 171 to 184 (HNHPSGQLAPSTQD) is the JAMM motif element.

Belongs to the UPF0758 family.

This Latilactobacillus sakei subsp. sakei (strain 23K) (Lactobacillus sakei subsp. sakei) protein is UPF0758 protein LCA_0852.